The chain runs to 223 residues: Germin-like protein subfamily 1 member 10 (223 aa).

Positions 1-24 (MAMKSLSFLAALSLLALTLPLTIA) are cleaved as a signal peptide. Residues C34 and C51 are joined by a disulfide bond. An N-linked (GlcNAc...) asparagine glycan is attached at N38. One can recognise a Cupin type-1 domain in the interval 65–215 (PGLQTARPIT…AFQVDPRVVM (151 aa)). Positions 113, 115, 120, and 161 each coordinate Mn(2+).

The protein belongs to the germin family. Oligomer (believed to be a pentamer but probably hexamer).

It localises to the secreted. Its subcellular location is the extracellular space. The protein localises to the apoplast. In terms of biological role, may play a role in plant defense. Probably has no oxalate oxidase activity even if the active site is conserved. The protein is Germin-like protein subfamily 1 member 10 of Arabidopsis thaliana (Mouse-ear cress).